The sequence spans 359 residues: Type II methyltransferase M.HinfI (359 aa).

The 84-residue stretch at 275–358 folds into the RAMA domain; it reads KVPMKTLIEA…LDSLRYEYTN (84 aa).

It belongs to the N(4)/N(6)-methyltransferase family.

The enzyme catalyses a 2'-deoxyadenosine in DNA + S-adenosyl-L-methionine = an N(6)-methyl-2'-deoxyadenosine in DNA + S-adenosyl-L-homocysteine + H(+). Its function is as follows. A beta subtype methylase that recognizes the double-stranded sequence 5'-GANTC-3', methylates A-2 on both strands, and protects the DNA from cleavage by the HinfI endonuclease. This chain is Type II methyltransferase M.HinfI (hinfIM), found in Haemophilus influenzae.